A 53-amino-acid chain; its full sequence is Antilisterial bacteriocin subtilosin biosynthesis protein AlbB (53 aa).

Transmembrane regions (helical) follow at residues 8–28 and 30–50; these read ILLY…FVKS and YLFT…ARKA.

It is found in the cell membrane. Its function is as follows. Involved in the production of the bacteriocin subtilosin. Required for maximal production and for optimal immunity to subtilosin. This is Antilisterial bacteriocin subtilosin biosynthesis protein AlbB (albB) from Bacillus subtilis (strain 168).